A 113-amino-acid chain; its full sequence is Dolichyl-diphosphooligosaccharide--protein glycosyltransferase subunit DAD1 (113 aa).

S2 is modified (N-acetylserine). The Cytoplasmic portion of the chain corresponds to 2–30 (SASVLSVISRFLEEYLSATPQRLKLLDAY). Residues 31 to 51 (LLYILLTGALQFGYCLLVGTF) traverse the membrane as a helical segment. Position 52 (P52) is a topological domain, lumenal. Residues 53–73 (FNSFLSGFISCVGSFILAVCL) traverse the membrane as a helical segment. Topologically, residues 74–92 (RIQINPQNKADFQGISPER) are cytoplasmic. Residues 93 to 113 (AFADFLFASTILHLVVMNFVG) traverse the membrane as a helical segment.

It belongs to the DAD/OST2 family. As to quaternary structure, component of the oligosaccharyltransferase (OST) complex. OST exists in two different complex forms which contain common core subunits RPN1, RPN2, OST48, OST4, DAD1 and TMEM258, either STT3A or STT3B as catalytic subunits, and form-specific accessory subunits. STT3A complex assembly occurs through the formation of 3 subcomplexes. Subcomplex 1 contains RPN1 and TMEM258, subcomplex 2 contains the STT3A-specific subunits STT3A, DC2/OSTC, and KCP2 as well as the core subunit OST4, and subcomplex 3 contains RPN2, DAD1, and OST48. The STT3A complex can form stable complexes with the Sec61 complex or with both the Sec61 and TRAP complexes.

The protein localises to the endoplasmic reticulum membrane. The protein operates within protein modification; protein glycosylation. In terms of biological role, subunit of the oligosaccharyl transferase (OST) complex that catalyzes the initial transfer of a defined glycan (Glc(3)Man(9)GlcNAc(2) in eukaryotes) from the lipid carrier dolichol-pyrophosphate to an asparagine residue within an Asn-X-Ser/Thr consensus motif in nascent polypeptide chains, the first step in protein N-glycosylation. N-glycosylation occurs cotranslationally and the complex associates with the Sec61 complex at the channel-forming translocon complex that mediates protein translocation across the endoplasmic reticulum (ER). All subunits are required for a maximal enzyme activity. This chain is Dolichyl-diphosphooligosaccharide--protein glycosyltransferase subunit DAD1, found in Bos taurus (Bovine).